We begin with the raw amino-acid sequence, 287 residues long: MIRSMTAYARREIKGEWGSATWEMRSVNQRYLETYFRLPEQFRSLEPVVRERIRTRLTRGKVECMLRFEPDASAQGELILNEKLAKQLVSAANWVKMQSDEGEINPVDILRWPGVMAAQEQDLDAIAAEILAALDGTLDDFIVARETEGQALKALIEQRLEGVSAEVAKVRAHMPEILQWQRERLVAKLEDAQVQLENNRLEQELVMMAQRIDVAEELDRLEAHVKETYNILKKKEAVGRRLDFMMQEFNRESNTLASKSINADVTNSAIELKVLIEQMREQIQNIE.

Belongs to the YicC/YloC family. A divalent metal cation serves as cofactor.

Its function is as follows. Probably a ssRNA endonuclease. In terms of biological role, might contribute to small RNA (sRNA) regulation. The sequence is that of Probable endoribonuclease YicC from Salmonella typhimurium (strain LT2 / SGSC1412 / ATCC 700720).